The chain runs to 335 residues: UDP-N-acetylenolpyruvoylglucosamine reductase 1 (335 aa).

One can recognise an FAD-binding PCMH-type domain in the interval 36–202 (RIGGPAAVFA…LEVELLLKPG (167 aa)). Arg181 is an active-site residue. Ser231 (proton donor) is an active-site residue. Glu306 is a catalytic residue.

This sequence belongs to the MurB family. The cofactor is FAD.

Its subcellular location is the cytoplasm. It catalyses the reaction UDP-N-acetyl-alpha-D-muramate + NADP(+) = UDP-N-acetyl-3-O-(1-carboxyvinyl)-alpha-D-glucosamine + NADPH + H(+). It functions in the pathway cell wall biogenesis; peptidoglycan biosynthesis. Cell wall formation. In Corynebacterium glutamicum (strain ATCC 13032 / DSM 20300 / JCM 1318 / BCRC 11384 / CCUG 27702 / LMG 3730 / NBRC 12168 / NCIMB 10025 / NRRL B-2784 / 534), this protein is UDP-N-acetylenolpyruvoylglucosamine reductase 1 (murB1).